Consider the following 156-residue polypeptide: MPRRREVPKREILPDPKFGSVELAKFMNVVMLDGKKAVAERIVYGALEQVQAKTGKEPIEVFSLAINNIKPIVEVKSRRVGGANYQVPVEVRPVRRLALAMRWLREAAKKRGEKSMDLRLAGELIDASEGRGAAMKKREDTHKMAEANKAFSHFRW.

This sequence belongs to the universal ribosomal protein uS7 family. As to quaternary structure, part of the 30S ribosomal subunit. Contacts proteins S9 and S11.

In terms of biological role, one of the primary rRNA binding proteins, it binds directly to 16S rRNA where it nucleates assembly of the head domain of the 30S subunit. Is located at the subunit interface close to the decoding center, probably blocks exit of the E-site tRNA. The protein is Small ribosomal subunit protein uS7 of Bordetella petrii (strain ATCC BAA-461 / DSM 12804 / CCUG 43448).